The primary structure comprises 165 residues: 6,7-dimethyl-8-ribityllumazine synthase (165 aa).

Residues phenylalanine 24, 62 to 64 (AFE), and 86 to 88 (AVI) each bind 5-amino-6-(D-ribitylamino)uracil. (2S)-2-hydroxy-3-oxobutyl phosphate is bound at residue 91-92 (DT). The active-site Proton donor is histidine 94. Phenylalanine 119 serves as a coordination point for 5-amino-6-(D-ribitylamino)uracil. Arginine 133 serves as a coordination point for (2S)-2-hydroxy-3-oxobutyl phosphate.

This sequence belongs to the DMRL synthase family.

The catalysed reaction is (2S)-2-hydroxy-3-oxobutyl phosphate + 5-amino-6-(D-ribitylamino)uracil = 6,7-dimethyl-8-(1-D-ribityl)lumazine + phosphate + 2 H2O + H(+). It functions in the pathway cofactor biosynthesis; riboflavin biosynthesis; riboflavin from 2-hydroxy-3-oxobutyl phosphate and 5-amino-6-(D-ribitylamino)uracil: step 1/2. In terms of biological role, catalyzes the formation of 6,7-dimethyl-8-ribityllumazine by condensation of 5-amino-6-(D-ribitylamino)uracil with 3,4-dihydroxy-2-butanone 4-phosphate. This is the penultimate step in the biosynthesis of riboflavin. The chain is 6,7-dimethyl-8-ribityllumazine synthase from Prochlorococcus marinus (strain MIT 9303).